We begin with the raw amino-acid sequence, 186 residues long: Large ribosomal subunit protein eL18B (186 aa).

K50 carries the N6,N6,N6-trimethyllysine modification. A Glycyl lysine isopeptide (Lys-Gly) (interchain with G-Cter in ubiquitin) cross-link involves residue K116.

The protein belongs to the eukaryotic ribosomal protein eL18 family. In terms of assembly, component of the large ribosomal subunit (LSU). Mature yeast ribosomes consist of a small (40S) and a large (60S) subunit. The 40S small subunit contains 1 molecule of ribosomal RNA (18S rRNA) and 33 different proteins (encoded by 57 genes). The large 60S subunit contains 3 rRNA molecules (25S, 5.8S and 5S rRNA) and 46 different proteins (encoded by 81 genes). eL18 interacts with NAP1.

It localises to the cytoplasm. In terms of biological role, component of the ribosome, a large ribonucleoprotein complex responsible for the synthesis of proteins in the cell. The small ribosomal subunit (SSU) binds messenger RNAs (mRNAs) and translates the encoded message by selecting cognate aminoacyl-transfer RNA (tRNA) molecules. The large subunit (LSU) contains the ribosomal catalytic site termed the peptidyl transferase center (PTC), which catalyzes the formation of peptide bonds, thereby polymerizing the amino acids delivered by tRNAs into a polypeptide chain. The nascent polypeptides leave the ribosome through a tunnel in the LSU and interact with protein factors that function in enzymatic processing, targeting, and the membrane insertion of nascent chains at the exit of the ribosomal tunnel. The polypeptide is Large ribosomal subunit protein eL18B (Saccharomyces cerevisiae (strain ATCC 204508 / S288c) (Baker's yeast)).